Reading from the N-terminus, the 453-residue chain is tRNA-2-methylthio-N(6)-dimethylallyladenosine synthase (453 aa).

In terms of domain architecture, MTTase N-terminal spans 21-137 (RGVYISTYGC…LPQLVAKSFA (117 aa)). Residues Cys-30, Cys-66, Cys-100, Cys-174, Cys-178, and Cys-181 each coordinate [4Fe-4S] cluster. Residues 160-389 (RNPGVATYVN…FDVHEAMAFE (230 aa)) enclose the Radical SAM core domain. In terms of domain architecture, TRAM spans 392–453 (KRYEGTTMKV…FPAVFRGEMI (62 aa)).

Belongs to the methylthiotransferase family. MiaB subfamily. As to quaternary structure, monomer. [4Fe-4S] cluster serves as cofactor.

Its subcellular location is the cytoplasm. It carries out the reaction N(6)-dimethylallyladenosine(37) in tRNA + (sulfur carrier)-SH + AH2 + 2 S-adenosyl-L-methionine = 2-methylsulfanyl-N(6)-dimethylallyladenosine(37) in tRNA + (sulfur carrier)-H + 5'-deoxyadenosine + L-methionine + A + S-adenosyl-L-homocysteine + 2 H(+). Catalyzes the methylthiolation of N6-(dimethylallyl)adenosine (i(6)A), leading to the formation of 2-methylthio-N6-(dimethylallyl)adenosine (ms(2)i(6)A) at position 37 in tRNAs that read codons beginning with uridine. The sequence is that of tRNA-2-methylthio-N(6)-dimethylallyladenosine synthase from Bdellovibrio bacteriovorus (strain ATCC 15356 / DSM 50701 / NCIMB 9529 / HD100).